Here is a 376-residue protein sequence, read N- to C-terminus: TelA-like protein SERP0976 (376 aa).

The protein belongs to the TelA family.

The sequence is that of TelA-like protein SERP0976 from Staphylococcus epidermidis (strain ATCC 35984 / DSM 28319 / BCRC 17069 / CCUG 31568 / BM 3577 / RP62A).